A 179-amino-acid polypeptide reads, in one-letter code: Ribosomal RNA small subunit methyltransferase G (179 aa).

Residues Gly54, Phe59, 105-106 (IE), and Arg121 each bind S-adenosyl-L-methionine.

Belongs to the methyltransferase superfamily. RNA methyltransferase RsmG family.

The protein localises to the cytoplasm. The enzyme catalyses guanosine(527) in 16S rRNA + S-adenosyl-L-methionine = N(7)-methylguanosine(527) in 16S rRNA + S-adenosyl-L-homocysteine. In terms of biological role, specifically methylates the N7 position of guanine in position 527 of 16S rRNA. In Helicobacter bizzozeronii, this protein is Ribosomal RNA small subunit methyltransferase G.